We begin with the raw amino-acid sequence, 277 residues long: Pantothenate synthetase (277 aa).

26–33 (MGNLHEGH) contributes to the ATP binding site. The Proton donor role is filled by H33. A (R)-pantoate-binding site is contributed by Q57. Q57 provides a ligand contact to beta-alanine. 144–147 (GKKD) lines the ATP pocket. (R)-pantoate is bound at residue Q150. ATP is bound by residues V173 and 181 to 184 (LSSR).

The protein belongs to the pantothenate synthetase family. Homodimer.

The protein resides in the cytoplasm. It carries out the reaction (R)-pantoate + beta-alanine + ATP = (R)-pantothenate + AMP + diphosphate + H(+). It participates in cofactor biosynthesis; (R)-pantothenate biosynthesis; (R)-pantothenate from (R)-pantoate and beta-alanine: step 1/1. Its function is as follows. Catalyzes the condensation of pantoate with beta-alanine in an ATP-dependent reaction via a pantoyl-adenylate intermediate. This Paraburkholderia xenovorans (strain LB400) protein is Pantothenate synthetase.